The following is a 1401-amino-acid chain: Alpha-latrotoxin-Lt1a (1401 aa).

The signal sequence occupies residues 1 to 20 (MISVGEIMERANHSLVRMRR). A furin-like endopeptidase recognition region region spans residues 17–20 (RMRR). Positions 238–257 (VLYALLYGTQTYVSVMFFLL) are helix H8 is the probable transmembrane region of the tetrameric pore inserted in the target cell membrane. Cys413 and Cys1066 are joined by a disulfide. ANK repeat units lie at residues 458 to 489 (LYNA…ATFD), 490 to 521 (HGRT…ELNQ), 525 to 554 (KGYT…SINS), 559 to 589 (FLQT…NINE), 593 to 622 (DGFT…DVNA), 626 to 656 (TGLT…DINA), 660 to 690 (NNIT…NANV), 695 to 723 (GLLS…NVNV), 729 to 758 (GGIT…NIEQ), 762 to 791 (EKYT…NFEA), 795 to 824 (SGAT…NWRD), 828 to 857 (NGQM…TVVD), 862 to 891 (NSDT…DINT), 895 to 924 (KGLA…NVYI), 928 to 957 (DGMN…KFEW), 971 to 1003 (EECA…GNFA), 1004 to 1033 (ICGP…SVDG), 1035 to 1064 (KTDT…KVNH), 1068 to 1097 (NGMT…DFRR), 1101 to 1131 (RGTT…DINI), 1137 to 1166 (DKDT…DVTI), and 1170 to 1199 (YDKT…KFRR). Residues 1026 to 1032 (EEFLSVD) form a 4C4.1 epitope region. Positions 1196 to 1199 (KFRR) are furin-like endopeptidase recognition region. Residues 1200-1401 (EYKSSYGERS…SDGILTKKLM (202 aa)) constitute a propeptide that is removed on maturation.

The protein belongs to the cationic peptide 01 (latrotoxin) family. 03 (alpha-latrotoxin) subfamily. In terms of assembly, homotetramer in membranes. In terms of processing, processed by furin-like proteases at both the N- and C-termini. As to expression, expressed in venom gland, cephalothorax, and abdomen tissues from both males and females.

The protein localises to the secreted. It is found in the target cell membrane. Presynaptic neurotoxin that causes massive release of neurotransmitters from vertebrate (but not invertebrate) nerve terminals and endocrine cells via a complex mechanism involving activation of receptor(s) and toxin insertion into the plasma membrane with subsequent pore formation. Binds to neurexin-1-alpha (NRXN1) in a calcium dependent manner, adhesion G protein-coupled receptor L1 (ADGRL1, also termed latrophilin-1 and calcium-independent receptor of latrotoxin (CIRL)), and receptor-type tyrosine-protein phosphatase S (PTPRS), also termed PTP sigma. NRXN1 and PTPRS are suggested to provide a platform for binding and subsequent pore formation events. In contrast, binding to ADGRL1 does not involve oligomerization and channel formation, but direct downstream stimulation of the synaptic fusion machinery. The sequence is that of Alpha-latrotoxin-Lt1a from Latrodectus tredecimguttatus (Mediterranean black widow spider).